Here is a 475-residue protein sequence, read N- to C-terminus: GTPase Der (475 aa).

2 consecutive EngA-type G domains span residues 3–167 (LTIA…GGER) and 205–380 (LRIA…RVWN). Residues 9 to 16 (GRPNVGKS), 56 to 60 (DTAGL), 119 to 122 (NKSE), 211 to 218 (GRPNTGKS), 258 to 262 (DTAGL), and 323 to 326 (NKWD) each bind GTP. The region spanning 381-465 (RRISTGKLNR…PIRISLRASD (85 aa)) is the KH-like domain.

Belongs to the TRAFAC class TrmE-Era-EngA-EngB-Septin-like GTPase superfamily. EngA (Der) GTPase family. Associates with the 50S ribosomal subunit.

Functionally, GTPase that plays an essential role in the late steps of ribosome biogenesis. This Bartonella henselae (strain ATCC 49882 / DSM 28221 / CCUG 30454 / Houston 1) (Rochalimaea henselae) protein is GTPase Der.